The primary structure comprises 906 residues: Pre-mRNA-splicing factor prp1 (906 aa).

2 disordered regions span residues 50–129 and 142–164; these read IEQR…VSSQ and DEDW…KQPR. Basic and acidic residues predominate over residues 108 to 124; it reads REKQEQLQKEKYEKENP. Phosphoserine is present on S235. HAT repeat units lie at residues 258 to 290, 322 to 353, 354 to 384, 385 to 416, 524 to 556, 558 to 590, 592 to 624, 693 to 725, 726 to 758, 760 to 792, and 824 to 856; these read GDIR…LEEV, HPAA…KLEN, QAQH…NLEE, EVDN…LETY, KCID…LEKL, GTTE…ERKN, NDIA…IEFV, EQIE…LEEK, QSVI…MELR, GNIS…LEPR, and KKAD…YSLE.

Interacts with brr2 and spp42.

The protein localises to the nucleus. Its function is as follows. Involved in pre-mRNA splicing. Interacts with prp6 and prp13. May also be involved in the regulation of the G0-G1/G2 transition. Required for pre-spliceosome formation, which is the first step of pre-mRNA splicing. This protein is associated with snRNP U5. Has a role in branch site-3' splice site selection. Associates with the branch site-3' splice 3'-exon region. The chain is Pre-mRNA-splicing factor prp1 (prp1) from Schizosaccharomyces pombe (strain 972 / ATCC 24843) (Fission yeast).